Here is a 217-residue protein sequence, read N- to C-terminus: tRNA (guanine-N(7)-)-methyltransferase (217 aa).

The S-adenosyl-L-methionine site is built by Glu-44, Glu-69, Asp-96, and Asp-118. Residue Asp-118 is part of the active site. Substrate-binding positions include Lys-122, Asp-154, and 191–194 (TEYE).

The protein belongs to the class I-like SAM-binding methyltransferase superfamily. TrmB family.

It carries out the reaction guanosine(46) in tRNA + S-adenosyl-L-methionine = N(7)-methylguanosine(46) in tRNA + S-adenosyl-L-homocysteine. The protein operates within tRNA modification; N(7)-methylguanine-tRNA biosynthesis. Catalyzes the formation of N(7)-methylguanine at position 46 (m7G46) in tRNA. The chain is tRNA (guanine-N(7)-)-methyltransferase from Bacillus mycoides (strain KBAB4) (Bacillus weihenstephanensis).